A 198-amino-acid chain; its full sequence is Lipid A 4'-phosphatase (198 aa).

A helical transmembrane segment spans residues 143–165 (AGQHTILQVTIGSLIAWGFAYLF).

The protein belongs to the lipid A LpxF 4'-phosphatase family.

It localises to the cell inner membrane. It functions in the pathway bacterial outer membrane biogenesis; LPS lipid A biosynthesis. Removes the 4'-phosphate group from tetra- and hexaacylated lipid A species, has no 1-phosphatase or Kdo hydrolase activity. Absence of the 4'-phosphate group renders the bacteria resistant to host-derived cationic antimicrobial peptides (CAMP), allowing it to camouflage itself from the host innate immune response, and plays a critical role in the long-term colonization of the host's stomach. This chain is Lipid A 4'-phosphatase, found in Helicobacter pylori (strain J99 / ATCC 700824) (Campylobacter pylori J99).